Consider the following 986-residue polypeptide: Ephrin type-B receptor 2 (986 aa).

Residues 1–18 (MAVRRLGAALLLLPLLAA) form the signal peptide. At 19 to 543 (VEETLMDSTT…QTSIKEKLPL (525 aa)) the chain is on the extracellular side. One can recognise an Eph LBD domain in the interval 20–202 (EETLMDSTTA…FYRKCPRIIQ (183 aa)). Intrachain disulfides connect cysteine 62-cysteine 184 and cysteine 97-cysteine 107. 4 N-linked (GlcNAc...) asparagine glycosylation sites follow: asparagine 265, asparagine 336, asparagine 428, and asparagine 482. 2 Fibronectin type-III domains span residues 324–434 (IPSA…TNQA) and 435–530 (APSA…TMTE). A helical transmembrane segment spans residues 544-564 (IVGSSAAGLVFLIAVVVIAIV). At 565–986 (CNRRGFERAD…QMNQIQSVEV (422 aa)) the chain is on the cytoplasmic side. In terms of domain architecture, Protein kinase spans 621-884 (VKIEQVIGAG…QIVNTLDKMI (264 aa)). ATP-binding positions include 627 to 635 (IGAGEFGEV) and lysine 653. Residue aspartate 746 is the Proton acceptor of the active site. Lysine 891 participates in a covalent cross-link: Glycyl lysine isopeptide (Lys-Gly) (interchain with G-Cter in ubiquitin). The SAM domain occupies 913–977 (TSFNTVDEWL…LNSIQVMRAQ (65 aa)). A PDZ-binding motif is present at residues 984–986 (VEV).

The protein belongs to the protein kinase superfamily. Tyr protein kinase family. Ephrin receptor subfamily. In terms of assembly, heterotetramer upon binding of the ligand. The heterotetramer is composed of an ephrin dimer and a receptor dimer. Interacts (via PDZ-binding motif) with GRIP1 and PICK1 (via PDZ domain). Interacts with ARHGEF15; mediates ARHGEF15 phosphorylation, ubiquitination and degradation by the proteasome. Interacts with AQP1; involved in endolymph production in the inner ear. Interacts with EFNA5. Interacts with SPSB1. Interacts with SPSB4. Interacts with SH2D3C. Autophosphorylated; ligand binding stimulates autophosphorylation on tyrosine residues. In terms of processing, ligand binding induces cleavage by matrix metalloproteinases (MMPs) such as MMP7/MMP9, producing an EphB2/N-terminal fragment (NTF) and a C-terminal long fragment (EphB2-LF). EphB2-LF is further cleaved by MMPs, producing EphB2/CTF1 which is further cleaved by the PS1/gamma-secretase producing EphB2/CTF2. Post-translationally, polyubiquitinated; ligand binding stimulates ubiquitination. Ubiquitinated by RNF186 at Lys-891, mainly through 'Lys-27'-linked polyubiquitin chains. Ubiquitinated by CRL2(KLHDC2) E3 ligase complex. In terms of tissue distribution, expressed in the epithelial dark cells of the inner ear. Expressed in the region of the proximal tubules of the kidney nephron. Expressed in myogenic progenitor cells.

The protein localises to the cell membrane. It is found in the cell projection. The protein resides in the axon. Its subcellular location is the dendrite. The enzyme catalyses L-tyrosyl-[protein] + ATP = O-phospho-L-tyrosyl-[protein] + ADP + H(+). Functionally, receptor tyrosine kinase which binds promiscuously transmembrane ephrin-B family ligands residing on adjacent cells, leading to contact-dependent bidirectional signaling into neighboring cells. The signaling pathway downstream of the receptor is referred to as forward signaling while the signaling pathway downstream of the ephrin ligand is referred to as reverse signaling. Functions in axon guidance during development. Involved in the guidance of commissural axons, that form a major interhemispheric connection between the 2 temporal lobes of the cerebral cortex. Also involved in guidance of contralateral inner ear efferent growth cones at the midline and of retinal ganglion cell axons to the optic disk. In addition to axon guidance, also regulates dendritic spines development and maturation and stimulates the formation of excitatory synapses. Upon activation by EFNB1, abolishes the ARHGEF15-mediated negative regulation on excitatory synapse formation. Controls other aspects of development including angiogenesis, palate development and in inner ear development through regulation of endolymph production. Forward and reverse signaling through the EFNB2/EPHB2 complex regulate movement and adhesion of cells that tubularize the urethra and septate the cloaca. May function as a tumor suppressor. May be involved in the regulation of platelet activation and blood coagulation. The sequence is that of Ephrin type-B receptor 2 from Mus musculus (Mouse).